A 172-amino-acid polypeptide reads, in one-letter code: Ubiquitin-conjugating enzyme E2 PEX4 (172 aa).

Positions S14–S167 constitute a UBC core domain. C104 acts as the Glycyl thioester intermediate in catalysis.

Belongs to the ubiquitin-conjugating enzyme family.

It catalyses the reaction S-ubiquitinyl-[E1 ubiquitin-activating enzyme]-L-cysteine + [E2 ubiquitin-conjugating enzyme]-L-cysteine = [E1 ubiquitin-activating enzyme]-L-cysteine + S-ubiquitinyl-[E2 ubiquitin-conjugating enzyme]-L-cysteine.. It participates in protein modification; protein ubiquitination. Functionally, ubiquitin-conjugating enzyme E2 that is essential for peroxisome biogenesis and plays a key role in development, pathogenicity, and cell wall integrity. Required for long and very long-chain fatty acid utilization and is involved in lipid droplet accumulation and the elimination of reactive oxygen species. Controls the expression of proteins involved in protein biosynthesis, fatty acid metabolism, cell wall synthesis, oxidation-reduction reactions, as well as of the enzymes involved in the biosynthesis of the mycotoxin deoxynivalenol (DON), including TRI5, TRI6, and TRI10. The polypeptide is Ubiquitin-conjugating enzyme E2 PEX4 (Gibberella zeae (strain ATCC MYA-4620 / CBS 123657 / FGSC 9075 / NRRL 31084 / PH-1) (Wheat head blight fungus)).